We begin with the raw amino-acid sequence, 69 residues long: Antimicrobial peptide Eval36 (69 aa).

The N-terminal stretch at 1–23 is a signal peptide; the sequence is MKAQFAILVISMMLLQLIVQTES. A Leucine amide modification is found at L37. Residues 38-69 constitute a propeptide that is removed on maturation; the sequence is GKRGLRNLDDFQDFLDSDTSDADLRMLRDMFR.

The protein belongs to the non-disulfide-bridged peptide (NDBP) superfamily. Short antimicrobial peptide (group 4) family. Expressed by the venom gland.

The protein localises to the secreted. Probable antimicrobial peptide. Shows low inhibitory activity against herpes simplex virus type 1 (HSV-1). This is Antimicrobial peptide Eval36 from Euscorpiops validus (Scorpion).